Consider the following 338-residue polypeptide: MPIFTAQELAERFNLQLFGDGNIRIHGVATLTQASPEQLSFLANPRYLTQLPNSRAGVIVLHADDVKAASGAVLIAKDPYVTFAKIATLFDIKPAREAGIHPLATVDPSAHVSPTAHVGAFVSIGARSSIGASCIIGTGSIIGDDCTIDDGSELIARVTLISRVRLGKRVRIHPGAVLGGEGFGLAMESGHWIKIPQLGGVVIGDDCEIGANSCIDRGALDDTVLEEDVHIDNLVQIAHNCRIGAHTAIAGCTGIAGSAKIGRYCLLGGHVGVVGHLQICDNVVITGKSVVRNSIHTPGEYSSGTPLTDNRTWRKNAVRFKQLDMLVRRMMAVSKEKA.

H239 acts as the Proton acceptor in catalysis.

The protein belongs to the transferase hexapeptide repeat family. LpxD subfamily. In terms of assembly, homotrimer.

It catalyses the reaction a UDP-3-O-[(3R)-3-hydroxyacyl]-alpha-D-glucosamine + a (3R)-hydroxyacyl-[ACP] = a UDP-2-N,3-O-bis[(3R)-3-hydroxyacyl]-alpha-D-glucosamine + holo-[ACP] + H(+). It participates in bacterial outer membrane biogenesis; LPS lipid A biosynthesis. In terms of biological role, catalyzes the N-acylation of UDP-3-O-acylglucosamine using 3-hydroxyacyl-ACP as the acyl donor. Is involved in the biosynthesis of lipid A, a phosphorylated glycolipid that anchors the lipopolysaccharide to the outer membrane of the cell. This chain is UDP-3-O-acylglucosamine N-acyltransferase, found in Xylella fastidiosa (strain M23).